A 424-amino-acid chain; its full sequence is MHRLQVVLGHLAGRSESSSALQAAPCSAGFPQASASDVVVVHGRRTPIGRAGRGGFKDTTPDELLSAVLTAVLQDVKLKPECLGDISVGNVLQPGAGAAMARIAQFLSGIPETVPLSAVNRQCSSGLQAVANIAGGIRNGSYDIGMACGVESMTLSERGNPGNISSRLLENEKARDCLIPMGITSENVAERFGISRQKQDAFALASQQKAASAQSKGCFRAEIVPVTTTVLDDKGDRKTITVSQDEGVRPSTTMEGLAKLKPAFKDGGSTTAGNSSQVSDGAAAVLLARRSKAEELGLPILGVLRSYAVVGVPPDIMGIGPAYAIPAALQKAGLTVNDIDIFEINEAFASQALYCVEKLGIPAEKVNPLGGAIALGHPLGCTGARQVVTLLNELKRRGRRAYGVVSMCIGTGMGAAAVFEYPGN.

Residues 1 to 26 (MHRLQVVLGHLAGRSESSSALQAAPC) constitute a peroxisome transit peptide. The PTS2-type peroxisomal targeting signal stretch occupies residues 1–26 (MHRLQVVLGHLAGRSESSSALQAAPC). Catalysis depends on Cys-123, which acts as the Acyl-thioester intermediate. Lys-173 and Lys-234 each carry N6-acetyllysine. Residues Arg-249, Thr-252, and Ser-276 each coordinate CoA. Residue Cys-408 is the Proton donor/acceptor of the active site.

This sequence belongs to the thiolase-like superfamily. Thiolase family. As to quaternary structure, homodimer. Interacts (via PTS2-type peroxisomal targeting signal region) with PEX7; leading to its translocation into peroxisomes.

It localises to the peroxisome. The catalysed reaction is an acyl-CoA + acetyl-CoA = a 3-oxoacyl-CoA + CoA. The enzyme catalyses 2 acetyl-CoA = acetoacetyl-CoA + CoA. It catalyses the reaction hexanoyl-CoA + acetyl-CoA = 3-oxooctanoyl-CoA + CoA. It carries out the reaction tetradecanoyl-CoA + acetyl-CoA = 3-oxohexadecanoyl-CoA + CoA. The catalysed reaction is 3-oxohexadecanedioyl-CoA + CoA = tetradecanedioyl-CoA + acetyl-CoA. The enzyme catalyses 3-oxo-(6Z,9Z,12Z,15Z,18Z,21Z)-tetracosahexaenoyl-CoA + CoA = (4Z,7Z,10Z,13Z,16Z,19Z)-docosahexaenoyl-CoA + acetyl-CoA. Its pathway is lipid metabolism; peroxisomal fatty acid beta-oxidation. Responsible for the thiolytic cleavage of straight chain 3-keto fatty acyl-CoAs (3-oxoacyl-CoAs). Plays an important role in fatty acid peroxisomal beta-oxidation. Catalyzes the cleavage of short, medium, long, and very long straight chain 3-oxoacyl-CoAs. Medium chain straight 3-oxoacyl-CoAs are preferred substrates. This is 3-ketoacyl-CoA thiolase B, peroxisomal from Rattus norvegicus (Rat).